The following is a 329-amino-acid chain: uncharacterized protein (329 aa).

Residues 109–147 (KALGNDQTSSMTSSTTAVTVAKSGDGQQQTGEQKEEDWK) are disordered. Residues 116-131 (TSSMTSSTTAVTVAKS) are compositionally biased toward low complexity.

It to the C-terminal of MG321/MPN_456.

This is an uncharacterized protein from Mycoplasma pneumoniae (strain ATCC 29342 / M129 / Subtype 1) (Mycoplasmoides pneumoniae).